We begin with the raw amino-acid sequence, 204 residues long: dTTP/UTP pyrophosphatase (204 aa).

Aspartate 68 acts as the Proton acceptor in catalysis.

It belongs to the Maf family. YhdE subfamily. It depends on a divalent metal cation as a cofactor.

Its subcellular location is the cytoplasm. It catalyses the reaction dTTP + H2O = dTMP + diphosphate + H(+). The catalysed reaction is UTP + H2O = UMP + diphosphate + H(+). Functionally, nucleoside triphosphate pyrophosphatase that hydrolyzes dTTP and UTP. May have a dual role in cell division arrest and in preventing the incorporation of modified nucleotides into cellular nucleic acids. In Thermotoga petrophila (strain ATCC BAA-488 / DSM 13995 / JCM 10881 / RKU-1), this protein is dTTP/UTP pyrophosphatase.